The chain runs to 677 residues: AP-2 complex subunit beta (677 aa).

Residues 597–677 (RLRTRDSNPS…PMTPETHLMD (81 aa)) form a disordered region. The segment covering 616–627 (KKYNHFHQKSQT) has biased composition (basic residues). Polar residues predominate over residues 636 to 654 (RNSWNPSPFSDESNSNTFS).

It belongs to the adaptor complexes large subunit family. As to quaternary structure, adaptor protein complex 2 (AP-2) is a heterotetramer composed of two large adaptins (alpha-type subunit apl3 and beta-type subunit apl1), a medium chain (mu-type subunit apm4) and a small adaptin (sigma-type subunit aps2).

Its subcellular location is the cell membrane. The protein localises to the membrane. It localises to the coated pit. In terms of biological role, adaptins are components of the adaptor complexes which link clathrin to receptors in coated vesicles. Clathrin-associated protein complexes are believed to interact with the cytoplasmic tails of membrane proteins, leading to their selection and concentration. Beta adaptin is a subunit of the plasma membrane adaptor. The polypeptide is AP-2 complex subunit beta (apl1) (Schizosaccharomyces pombe (strain 972 / ATCC 24843) (Fission yeast)).